The sequence spans 118 residues: Large ribosomal subunit protein bL17 (118 aa).

This sequence belongs to the bacterial ribosomal protein bL17 family. Part of the 50S ribosomal subunit. Contacts protein L32.

This chain is Large ribosomal subunit protein bL17, found in Gemmatimonas aurantiaca (strain DSM 14586 / JCM 11422 / NBRC 100505 / T-27).